Here is a 463-residue protein sequence, read N- to C-terminus: Asparagine--tRNA ligase (463 aa).

It belongs to the class-II aminoacyl-tRNA synthetase family. Homodimer.

The protein localises to the cytoplasm. It carries out the reaction tRNA(Asn) + L-asparagine + ATP = L-asparaginyl-tRNA(Asn) + AMP + diphosphate + H(+). This Clostridium botulinum (strain ATCC 19397 / Type A) protein is Asparagine--tRNA ligase.